Reading from the N-terminus, the 685-residue chain is DNA ligase (685 aa).

NAD(+) contacts are provided by residues 47 to 51, 96 to 97, and E125; these read DSEYD and SL. Residue K127 is the N6-AMP-lysine intermediate of the active site. R148, E185, K304, and K328 together coordinate NAD(+). Zn(2+)-binding residues include C422, C425, C440, and C446. The region spanning 605–685 is the BRCT domain; that stretch reads AEAQPLKGQT…ELLALLAANA (81 aa).

The protein belongs to the NAD-dependent DNA ligase family. LigA subfamily. It depends on Mg(2+) as a cofactor. Mn(2+) serves as cofactor.

It carries out the reaction NAD(+) + (deoxyribonucleotide)n-3'-hydroxyl + 5'-phospho-(deoxyribonucleotide)m = (deoxyribonucleotide)n+m + AMP + beta-nicotinamide D-nucleotide.. Its function is as follows. DNA ligase that catalyzes the formation of phosphodiester linkages between 5'-phosphoryl and 3'-hydroxyl groups in double-stranded DNA using NAD as a coenzyme and as the energy source for the reaction. It is essential for DNA replication and repair of damaged DNA. This Shewanella baltica (strain OS223) protein is DNA ligase.